Consider the following 209-residue polypeptide: Outer-membrane lipoprotein carrier protein (209 aa).

An N-terminal signal peptide occupies residues 1 to 21; the sequence is MHRQLRYAVLATALFASTAFA.

Belongs to the LolA family. As to quaternary structure, monomer.

The protein resides in the periplasm. Functionally, participates in the translocation of lipoproteins from the inner membrane to the outer membrane. Only forms a complex with a lipoprotein if the residue after the N-terminal Cys is not an aspartate (The Asp acts as a targeting signal to indicate that the lipoprotein should stay in the inner membrane). The protein is Outer-membrane lipoprotein carrier protein of Xanthomonas axonopodis pv. citri (strain 306).